Here is a 104-residue protein sequence, read N- to C-terminus: Replication restart protein PriB (104 aa).

Residues 1-101 form the SSB domain; it reads MTNRLVLSGT…LHAEQIDLID (101 aa).

It belongs to the PriB family. In terms of assembly, homodimer. Interacts with PriA and DnaT. Component of the replication restart primosome. Primosome assembly occurs via a 'hand-off' mechanism. PriA binds to replication forks, subsequently PriB then DnaT bind; DnaT then displaces ssDNA to generate the helicase loading substrate.

Involved in the restart of stalled replication forks, which reloads the replicative helicase on sites other than the origin of replication; the PriA-PriB pathway is the major replication restart pathway. During primosome assembly it facilitates complex formation between PriA and DnaT on DNA; stabilizes PriA on DNA. Stimulates the DNA unwinding activity of PriA helicase. This is Replication restart protein PriB from Enterobacter sp. (strain 638).